We begin with the raw amino-acid sequence, 203 residues long: Glycerol-3-phosphate acyltransferase (203 aa).

The next 5 membrane-spanning stretches (helical) occupy residues 6-26 (LTLA…AVLV), 56-76 (AAAM…YVAF), 82-102 (AVSL…PIFF), 118-138 (APIG…VVLI), and 141-161 (YSSL…WYFD).

This sequence belongs to the PlsY family. As to quaternary structure, probably interacts with PlsX.

It localises to the cell inner membrane. The enzyme catalyses an acyl phosphate + sn-glycerol 3-phosphate = a 1-acyl-sn-glycero-3-phosphate + phosphate. The protein operates within lipid metabolism; phospholipid metabolism. Its function is as follows. Catalyzes the transfer of an acyl group from acyl-phosphate (acyl-PO(4)) to glycerol-3-phosphate (G3P) to form lysophosphatidic acid (LPA). This enzyme utilizes acyl-phosphate as fatty acyl donor, but not acyl-CoA or acyl-ACP. In Shewanella loihica (strain ATCC BAA-1088 / PV-4), this protein is Glycerol-3-phosphate acyltransferase.